The chain runs to 178 residues: ATP synthase subunit delta (178 aa).

Belongs to the ATPase delta chain family. In terms of assembly, F-type ATPases have 2 components, F(1) - the catalytic core - and F(0) - the membrane proton channel. F(1) has five subunits: alpha(3), beta(3), gamma(1), delta(1), epsilon(1). F(0) has three main subunits: a(1), b(2) and c(10-14). The alpha and beta chains form an alternating ring which encloses part of the gamma chain. F(1) is attached to F(0) by a central stalk formed by the gamma and epsilon chains, while a peripheral stalk is formed by the delta and b chains.

The protein resides in the cell inner membrane. F(1)F(0) ATP synthase produces ATP from ADP in the presence of a proton or sodium gradient. F-type ATPases consist of two structural domains, F(1) containing the extramembraneous catalytic core and F(0) containing the membrane proton channel, linked together by a central stalk and a peripheral stalk. During catalysis, ATP synthesis in the catalytic domain of F(1) is coupled via a rotary mechanism of the central stalk subunits to proton translocation. Its function is as follows. This protein is part of the stalk that links CF(0) to CF(1). It either transmits conformational changes from CF(0) to CF(1) or is implicated in proton conduction. This chain is ATP synthase subunit delta, found in Thioalkalivibrio sulfidiphilus (strain HL-EbGR7).